The sequence spans 391 residues: Ferrochelatase (391 aa).

2 residues coordinate Fe cation: H196 and E281.

It belongs to the ferrochelatase family.

Its subcellular location is the cytoplasm. It catalyses the reaction heme b + 2 H(+) = protoporphyrin IX + Fe(2+). The protein operates within porphyrin-containing compound metabolism; protoheme biosynthesis; protoheme from protoporphyrin-IX: step 1/1. Functionally, catalyzes the ferrous insertion into protoporphyrin IX. This chain is Ferrochelatase, found in Synechococcus sp. (strain CC9605).